A 133-amino-acid polypeptide reads, in one-letter code: Ribosome-binding factor A (133 aa).

Belongs to the RbfA family. Monomer. Binds 30S ribosomal subunits, but not 50S ribosomal subunits or 70S ribosomes.

Its subcellular location is the cytoplasm. One of several proteins that assist in the late maturation steps of the functional core of the 30S ribosomal subunit. Associates with free 30S ribosomal subunits (but not with 30S subunits that are part of 70S ribosomes or polysomes). Required for efficient processing of 16S rRNA. May interact with the 5'-terminal helix region of 16S rRNA. The polypeptide is Ribosome-binding factor A (Yersinia enterocolitica).